Reading from the N-terminus, the 257-residue chain is NAD-capped RNA hydrolase NudC (257 aa).

Lys25 and Arg69 together coordinate substrate. Positions 98 and 101 each coordinate Zn(2+). Residue Glu111 coordinates substrate. Zn(2+)-binding residues include Cys116 and Cys119. Tyr124 lines the substrate pocket. The 124-residue stretch at 125–248 (PQIAPCIIVA…TVARRLIEDT (124 aa)) folds into the Nudix hydrolase domain. 3 residues coordinate a divalent metal cation: Ala158, Glu174, and Glu178. Positions 159 to 180 (GFVEVGETLEQAVAREVMEESG) match the Nudix box motif. 192 to 199 (QPWPFPQS) contributes to the substrate binding site. Glu219 provides a ligand contact to a divalent metal cation. Ala241 is a substrate binding site.

This sequence belongs to the Nudix hydrolase family. NudC subfamily. Homodimer. Mg(2+) is required as a cofactor. Requires Mn(2+) as cofactor. It depends on Zn(2+) as a cofactor.

It carries out the reaction a 5'-end NAD(+)-phospho-ribonucleoside in mRNA + H2O = a 5'-end phospho-adenosine-phospho-ribonucleoside in mRNA + beta-nicotinamide D-ribonucleotide + 2 H(+). The enzyme catalyses NAD(+) + H2O = beta-nicotinamide D-ribonucleotide + AMP + 2 H(+). The catalysed reaction is NADH + H2O = reduced beta-nicotinamide D-ribonucleotide + AMP + 2 H(+). MRNA decapping enzyme that specifically removes the nicotinamide adenine dinucleotide (NAD) cap from a subset of mRNAs by hydrolyzing the diphosphate linkage to produce nicotinamide mononucleotide (NMN) and 5' monophosphate mRNA. The NAD-cap is present at the 5'-end of some mRNAs and stabilizes RNA against 5'-processing. Has preference for mRNAs with a 5'-end purine. Catalyzes the hydrolysis of a broad range of dinucleotide pyrophosphates. In Escherichia fergusonii (strain ATCC 35469 / DSM 13698 / CCUG 18766 / IAM 14443 / JCM 21226 / LMG 7866 / NBRC 102419 / NCTC 12128 / CDC 0568-73), this protein is NAD-capped RNA hydrolase NudC.